We begin with the raw amino-acid sequence, 840 residues long: DNA gyrase subunit A (840 aa).

A Topo IIA-type catalytic domain is found at 51-516 (LPDVRDGFKP…VSSHIDDEDL (466 aa)). Residue Tyr139 is the O-(5'-phospho-DNA)-tyrosine intermediate of the active site. The GyrA-box motif lies at 543 to 549 (QRRGGVG).

Belongs to the type II topoisomerase GyrA/ParC subunit family. Heterotetramer, composed of two GyrA and two GyrB chains. In the heterotetramer, GyrA contains the active site tyrosine that forms a transient covalent intermediate with DNA, while GyrB binds cofactors and catalyzes ATP hydrolysis.

Its subcellular location is the cytoplasm. The enzyme catalyses ATP-dependent breakage, passage and rejoining of double-stranded DNA.. In terms of biological role, a type II topoisomerase that negatively supercoils closed circular double-stranded (ds) DNA in an ATP-dependent manner to modulate DNA topology and maintain chromosomes in an underwound state. Negative supercoiling favors strand separation, and DNA replication, transcription, recombination and repair, all of which involve strand separation. Also able to catalyze the interconversion of other topological isomers of dsDNA rings, including catenanes and knotted rings. Type II topoisomerases break and join 2 DNA strands simultaneously in an ATP-dependent manner. This Ureaplasma parvum serovar 3 (strain ATCC 700970) protein is DNA gyrase subunit A.